The sequence spans 156 residues: Endogenous retrovirus group K member 6 Pro protein (156 aa).

Positions 21–96 constitute a Peptidase A2 domain; sequence FEGLVDTGAD…IPLNLWGRDL (76 aa). Asp26 is an active-site residue. The 46-residue stretch at 111–156 folds into the G-patch domain; it reads YSPTSQKIMTKMGYIPGKGLGKNEDGIKIPVEAKINQEREGIGNPC.

It belongs to the peptidase A2 family. HERV class-II K(HML-2) subfamily. In terms of assembly, active as a homodimer. In terms of processing, autoproteolytically processed at the N-terminus. Expected C-terminal autoprocessing not detected. The sequence shown is that of the processed Pro protein.

The catalysed reaction is Processing at the authentic HIV-1 PR recognition site and release of the mature p17 matrix and the p24 capsid protein, as a result of the cleavage of the -SQNY-|-PIVQ- cleavage site.. Retroviral proteases have roles in the processing of the primary translation products and the maturation of the viral particle. Endogenous Pro proteins may have kept, lost or modified their original function during evolution. In Homo sapiens (Human), this protein is Endogenous retrovirus group K member 6 Pro protein (ERVK-6).